The primary structure comprises 536 residues: MLSRIEQELAQLGITNVKEIVRNPSYEQLFEEEMKPELEGFEKGRLTTSGAVAVDTGIFTGRSPKDKYIVYDETSKDNVWWTSDAVKNDNKPMNQATWQSLKELVTHQLSNKRLFVVDAFCGANKDSRVAVRIVTEVAWQAHFVKNMFVRPSEEELLNFVPDFVVMNGSKVTNPNWKEQGLNSENFVAFNLTEKIQLIGGTWYGGEMKKGLFSLMNYWLPLKGIASMHCSANVGAKGDVAVFFGLSGTGKTTLSTDPKRKLIGDDEHGWDDDGVFNYEGGCYAKTINLSEENEPDIYRAIRRDALLENVVVREDGSVDFADGSKTENTRVSYPIHHIDNIVEPVSKAGHAKKVIFLTADAFGVLPPVSKLTPEQTKYYFLSGFTAKLAGTERGITEPTPTFSACFGAAFLSLHPTKYAEVLVKRMEEAGSQAYLVNTGWNGSGKRISIKDTRGIIDAILDGSIEKAETKELPIFNLAIPTALPNVDPAILDPRDTYADKAQWQTKAEDLAGRFVKNFEKYTTNDEGKALVAAGPKL.

Substrate-binding residues include Arg-62, Tyr-203, and Lys-209. Residues Lys-209, His-228, and 244–252 (GLSGTGKTT) each bind ATP. The Mn(2+) site is built by Lys-209 and His-228. Asp-265 contacts Mn(2+). ATP contacts are provided by residues Glu-293, Arg-329, 445–446 (RI), and Thr-451. Arg-329 lines the substrate pocket.

The protein belongs to the phosphoenolpyruvate carboxykinase (ATP) family. Monomer. The cofactor is Mn(2+).

Its subcellular location is the cytoplasm. It catalyses the reaction oxaloacetate + ATP = phosphoenolpyruvate + ADP + CO2. Its pathway is carbohydrate biosynthesis; gluconeogenesis. Functionally, involved in the gluconeogenesis. Catalyzes the conversion of oxaloacetate (OAA) to phosphoenolpyruvate (PEP) through direct phosphoryl transfer between the nucleoside triphosphate and OAA. The polypeptide is Phosphoenolpyruvate carboxykinase (ATP) (Actinobacillus pleuropneumoniae serotype 7 (strain AP76)).